The sequence spans 589 residues: Protein NRT1/ PTR FAMILY 7.2 (589 aa).

2 helical membrane passes run tryptophan 32–valine 52 and tryptophan 78–glycine 98. At threonine 102 the chain carries Phosphothreonine. Transmembrane regions (helical) follow at residues isoleucine 105–leucine 125, valine 147–isoleucine 167, isoleucine 187–valine 207, tryptophan 217–isoleucine 237, isoleucine 343–valine 363, isoleucine 377–tyrosine 397, methionine 423–histidine 443, isoleucine 464–glycine 484, leucine 504–methionine 524, and phenylalanine 548–lysine 568.

This sequence belongs to the major facilitator superfamily. Proton-dependent oligopeptide transporter (POT/PTR) (TC 2.A.17) family. Expressed in xylem parenchyma cells within the vasculature. Expressed in siliques and flowers. Higher expression in shoots than in roots.

It is found in the cell membrane. Functionally, low-affinity nitrate transporter. Involved in nitrate removal from xylem sap. Not involved in oligopeptides transport. In Arabidopsis thaliana (Mouse-ear cress), this protein is Protein NRT1/ PTR FAMILY 7.2 (NPF7.2).